Consider the following 432-residue polypeptide: Adenylosuccinate synthetase (432 aa).

Residues G13–K19 and G41–T43 contribute to the GTP site. D14 acts as the Proton acceptor in catalysis. The Mg(2+) site is built by D14 and G41. IMP is bound by residues D14 to K17, N39 to H42, T130, R144, Q225, T240, and R304. The Proton donor role is filled by H42. A substrate-binding site is contributed by A300 to R306. Residues R306, K332–D334, and S415–G417 each bind GTP.

Belongs to the adenylosuccinate synthetase family. Homodimer. It depends on Mg(2+) as a cofactor.

It localises to the cytoplasm. The enzyme catalyses IMP + L-aspartate + GTP = N(6)-(1,2-dicarboxyethyl)-AMP + GDP + phosphate + 2 H(+). It functions in the pathway purine metabolism; AMP biosynthesis via de novo pathway; AMP from IMP: step 1/2. Plays an important role in the de novo pathway of purine nucleotide biosynthesis. Catalyzes the first committed step in the biosynthesis of AMP from IMP. The sequence is that of Adenylosuccinate synthetase from Mannheimia succiniciproducens (strain KCTC 0769BP / MBEL55E).